A 332-amino-acid polypeptide reads, in one-letter code: Casein kinase I isoform 2 (332 aa).

Residues 11–282 (FRIGQKIGSG…YLKRLFRELF (272 aa)) form the Protein kinase domain. ATP is bound by residues 17-25 (IGSGSFGEI) and lysine 40. Aspartate 133 functions as the Proton acceptor in the catalytic mechanism. The interval 306-332 (EGRADQQQQQQQQQQRRGSEKEDEHPV) is disordered. The span at 311 to 320 (QQQQQQQQQQ) shows a compositional bias: low complexity. The span at 322–332 (RGSEKEDEHPV) shows a compositional bias: basic and acidic residues.

Belongs to the protein kinase superfamily. Ser/Thr protein kinase family. Requires Mg(2+) as cofactor.

The catalysed reaction is L-seryl-[protein] + ATP = O-phospho-L-seryl-[protein] + ADP + H(+). It catalyses the reaction L-threonyl-[protein] + ATP = O-phospho-L-threonyl-[protein] + ADP + H(+). In terms of biological role, serine/threonine protein kinase. May phosphorylate ZC3H11 during unstressed conditions, leading to proteasome-dependent degradation of ZC3H11. This is Casein kinase I isoform 2 from Trypanosoma brucei brucei.